A 466-amino-acid polypeptide reads, in one-letter code: Ribulose bisphosphate carboxylase large chain (466 aa).

Lys-5 carries the N6,N6,N6-trimethyllysine modification. Substrate-binding residues include Asn-114 and Thr-164. The active-site Proton acceptor is the Lys-166. Lys-168 contacts substrate. Mg(2+) contacts are provided by Lys-192, Asp-194, and Glu-195. Lys-192 is modified (N6-carboxylysine). The active-site Proton acceptor is the His-285. Residues Arg-286, His-318, and Ser-370 each contribute to the substrate site.

It belongs to the RuBisCO large chain family. Type I subfamily. In terms of assembly, heterohexadecamer of 8 large chains and 8 small chains. Mg(2+) is required as a cofactor.

Its subcellular location is the plastid. The protein resides in the chloroplast. It catalyses the reaction 2 (2R)-3-phosphoglycerate + 2 H(+) = D-ribulose 1,5-bisphosphate + CO2 + H2O. The enzyme catalyses D-ribulose 1,5-bisphosphate + O2 = 2-phosphoglycolate + (2R)-3-phosphoglycerate + 2 H(+). Its function is as follows. RuBisCO catalyzes two reactions: the carboxylation of D-ribulose 1,5-bisphosphate, the primary event in carbon dioxide fixation, as well as the oxidative fragmentation of the pentose substrate in the photorespiration process. Both reactions occur simultaneously and in competition at the same active site. This Drosera regia (King sundew) protein is Ribulose bisphosphate carboxylase large chain.